The primary structure comprises 365 residues: MIMPRYLGLMSGTSMDGMDIVLIEQGDRTTLLASHYLPMPADLREDILALCAPGPDEIARAADVERRWVGLAAQGVGELLRQQRLAPGAVRAIGSHGQTIRHEPARHFTVQIGNPALLAELTGIDVIADFRRRDVAAGGQGAPLVPAFHQALFGDSGKARAILNIGGFSNVSLLAPGKPVRGFDCGPGNVLMDAWIHCRRGEHFDRDGAWAASGRVNDDLLASLLADEFFATRGPKSTGRERFNLAWLQERLAGHPVLPAEDVQATLLELSARSISESLLDAQPECEEVLVCGGGAFNAALMARLAALMPAARIASTDAYGIPPAWMEGMAFAWLAHRFLERLPGNCPDVTGAAGPRVLGALYPA.

G12 to D19 is a binding site for ATP.

This sequence belongs to the anhydro-N-acetylmuramic acid kinase family.

It carries out the reaction 1,6-anhydro-N-acetyl-beta-muramate + ATP + H2O = N-acetyl-D-muramate 6-phosphate + ADP + H(+). Its pathway is amino-sugar metabolism; 1,6-anhydro-N-acetylmuramate degradation. The protein operates within cell wall biogenesis; peptidoglycan recycling. Functionally, catalyzes the specific phosphorylation of 1,6-anhydro-N-acetylmuramic acid (anhMurNAc) with the simultaneous cleavage of the 1,6-anhydro ring, generating MurNAc-6-P. Is required for the utilization of anhMurNAc either imported from the medium or derived from its own cell wall murein, and thus plays a role in cell wall recycling. The polypeptide is Anhydro-N-acetylmuramic acid kinase (Pseudomonas paraeruginosa (strain DSM 24068 / PA7) (Pseudomonas aeruginosa (strain PA7))).